Here is a 570-residue protein sequence, read N- to C-terminus: Proline--tRNA ligase (570 aa).

Belongs to the class-II aminoacyl-tRNA synthetase family. ProS type 1 subfamily. In terms of assembly, homodimer.

The protein localises to the cytoplasm. The enzyme catalyses tRNA(Pro) + L-proline + ATP = L-prolyl-tRNA(Pro) + AMP + diphosphate. In terms of biological role, catalyzes the attachment of proline to tRNA(Pro) in a two-step reaction: proline is first activated by ATP to form Pro-AMP and then transferred to the acceptor end of tRNA(Pro). As ProRS can inadvertently accommodate and process non-cognate amino acids such as alanine and cysteine, to avoid such errors it has two additional distinct editing activities against alanine. One activity is designated as 'pretransfer' editing and involves the tRNA(Pro)-independent hydrolysis of activated Ala-AMP. The other activity is designated 'posttransfer' editing and involves deacylation of mischarged Ala-tRNA(Pro). The misacylated Cys-tRNA(Pro) is not edited by ProRS. This is Proline--tRNA ligase from Shewanella oneidensis (strain ATCC 700550 / JCM 31522 / CIP 106686 / LMG 19005 / NCIMB 14063 / MR-1).